A 142-amino-acid polypeptide reads, in one-letter code: Large ribosomal subunit protein uL11 (142 aa).

This sequence belongs to the universal ribosomal protein uL11 family. In terms of assembly, part of the ribosomal stalk of the 50S ribosomal subunit. Interacts with L10 and the large rRNA to form the base of the stalk. L10 forms an elongated spine to which L12 dimers bind in a sequential fashion forming a multimeric L10(L12)X complex. One or more lysine residues are methylated.

Forms part of the ribosomal stalk which helps the ribosome interact with GTP-bound translation factors. The chain is Large ribosomal subunit protein uL11 from Mesoplasma florum (strain ATCC 33453 / NBRC 100688 / NCTC 11704 / L1) (Acholeplasma florum).